Consider the following 64-residue polypeptide: Alpha-mammal toxin Lqq5 (64 aa).

Residues 2 to 64 form the LCN-type CS-alpha/beta domain; sequence KDGYIVDDKN…VSIKEKGRCN (63 aa). 4 disulfide bridges follow: cysteine 12-cysteine 63, cysteine 16-cysteine 36, cysteine 22-cysteine 46, and cysteine 26-cysteine 48. The residue at position 64 (asparagine 64) is an Asparagine amide.

This sequence belongs to the long (4 C-C) scorpion toxin superfamily. Sodium channel inhibitor family. Alpha subfamily. Expressed by the venom gland.

It localises to the secreted. In terms of biological role, alpha toxins bind voltage-independently at site-3 of sodium channels (Nav) and inhibit the inactivation of the activated channels, thereby blocking neuronal transmission. Is active on mammals and bind with high affinity to rat brain synaptosome. Does not display phospholipid-binding activity. The protein is Alpha-mammal toxin Lqq5 of Leiurus quinquestriatus quinquestriatus (Egyptian scorpion).